The chain runs to 185 residues: Ribosome-recycling factor (185 aa).

Residues 137–166 (DGLKKAEKDGDIGQDESRGQSEKVQKMTDD) are disordered.

It belongs to the RRF family.

It localises to the cytoplasm. Responsible for the release of ribosomes from messenger RNA at the termination of protein biosynthesis. May increase the efficiency of translation by recycling ribosomes from one round of translation to another. This Agrobacterium fabrum (strain C58 / ATCC 33970) (Agrobacterium tumefaciens (strain C58)) protein is Ribosome-recycling factor.